The following is a 295-amino-acid chain: Small ribosomal subunit protein uS2 (295 aa).

It belongs to the universal ribosomal protein uS2 family. Component of the small ribosomal subunit. Mature ribosomes consist of a small (40S) and a large (60S) subunit. The 40S subunit contains about 33 different proteins and 1 molecule of RNA (18S). The 60S subunit contains about 49 different proteins and 3 molecules of RNA (25S, 5.8S and 5S). Interacts with RPS21.

It localises to the cytoplasm. Functionally, required for the assembly and/or stability of the 40S ribosomal subunit. Required for the processing of the 20S rRNA-precursor to mature 18S rRNA in a late step of the maturation of 40S ribosomal subunits. In Paracoccidioides brasiliensis (strain Pb18), this protein is Small ribosomal subunit protein uS2.